The following is a 449-amino-acid chain: Elongation factor 1-alpha (449 aa).

The tr-type G domain occupies 5–230; it reads KVHINIVVIG…DQINEPKRPS (226 aa). The interval 14–21 is G1; sequence GHVDSGKS. Residue 14–21 coordinates GTP; it reads GHVDSGKS. Lys55 carries the N6,N6-dimethyllysine modification. The G2 stretch occupies residues 70–74; it reads GITID. Lys79 is subject to N6,N6,N6-trimethyllysine. The G3 stretch occupies residues 91–94; the sequence is DAPG. GTP is bound by residues 91-95 and 153-156; these read DAPGH and NKMD. Residues 153–156 form a G4 region; it reads NKMD. Lys187 is subject to N6,N6,N6-trimethyllysine. Positions 194–196 are G5; it reads SGF. The residue at position 261 (Lys261) is an N6-methyllysine. The residue at position 289 (Glu289) is a 5-glutamyl glycerylphosphorylethanolamine. Lys306 is modified (N6,N6,N6-trimethyllysine). At Glu362 the chain carries 5-glutamyl glycerylphosphorylethanolamine. Lys396 bears the N6,N6,N6-trimethyllysine mark.

This sequence belongs to the TRAFAC class translation factor GTPase superfamily. Classic translation factor GTPase family. EF-Tu/EF-1A subfamily.

The protein localises to the cytoplasm. In terms of biological role, this protein promotes the GTP-dependent binding of aminoacyl-tRNA to the A-site of ribosomes during protein biosynthesis. The sequence is that of Elongation factor 1-alpha from Daucus carota (Wild carrot).